A 1921-amino-acid chain; its full sequence is Mediator of RNA polymerase II transcription subunit 13 (1921 aa).

Residues lysine 220 and lysine 226 each participate in a glycyl lysine isopeptide (Lys-Gly) (interchain with G-Cter in ubiquitin) cross-link. 3 disordered regions span residues 400 to 434 (YEKN…TSRT), 702 to 724 (TQVE…NSST), and 1485 to 1528 (SPTF…GDVS). Positions 407-427 (SSGSSRNSSISSTSSASSGSG) are enriched in low complexity. Polar residues-rich tracts occupy residues 1486-1496 (PTFTSLGSESS) and 1515-1527 (EGIT…QGDV).

It belongs to the Mediator complex subunit 13 family. As to quaternary structure, component of the Mediator complex. Interacts with CYCC1-2 (CDK8 homolog). As to expression, ubiquitous. Highest expression in the shoot apex.

It is found in the nucleus. In terms of biological role, component of the Mediator complex, a coactivator involved in the regulated transcription of nearly all RNA polymerase II-dependent genes. Mediator functions as a bridge to convey information from gene-specific regulatory proteins to the basal RNA polymerase II transcription machinery. The Mediator complex, having a compact conformation in its free form, is recruited to promoters by direct interactions with regulatory proteins and serves for the assembly of a functional preinitiation complex with RNA polymerase II and the general transcription factors. Acts closely together with MAB12. Involved in the regulation of embryo patterning and cotyledon organogenesis. May act through transient repression of specific genes such as the ones responsive to auxin. This chain is Mediator of RNA polymerase II transcription subunit 13 (MED13), found in Arabidopsis thaliana (Mouse-ear cress).